Consider the following 129-residue polypeptide: Ropporin-1 (129 aa).

The RIIa domain occupies 11 to 34; the sequence is PELPELLKTQPPDLIQWAAEYFGA.

This sequence belongs to the ropporin family. As to quaternary structure, homodimer. Interacts with AKAP3. May interact with SPA17. Interacts with RHPN1. Interacts with FSCB; the interaction increases upon spermatozoa capacitation conditions. Interacts with CFAP61. In terms of processing, sumoylated, sumoylation decreases upon spermatozoa capacitation conditions.

It is found in the cell projection. The protein resides in the cilium. It localises to the flagellum. Its function is as follows. Important for male fertility. With ROPN1L, involved in fibrous sheath integrity and sperm motility, plays a role in PKA-dependent signaling processes required for spermatozoa capacitation. The polypeptide is Ropporin-1 (Mesocricetus auratus (Golden hamster)).